Here is a 395-residue protein sequence, read N- to C-terminus: Phosphoglycerate kinase (395 aa).

Residues 21-23, R36, 59-62, R114, and R147 contribute to the substrate site; these read DLN and HLGR. ATP contacts are provided by residues K198, E320, and 346-349; that span reads GGDT.

The protein belongs to the phosphoglycerate kinase family. As to quaternary structure, monomer.

It localises to the cytoplasm. It carries out the reaction (2R)-3-phosphoglycerate + ATP = (2R)-3-phospho-glyceroyl phosphate + ADP. The protein operates within carbohydrate degradation; glycolysis; pyruvate from D-glyceraldehyde 3-phosphate: step 2/5. The chain is Phosphoglycerate kinase from Nitrosospira multiformis (strain ATCC 25196 / NCIMB 11849 / C 71).